Here is a 565-residue protein sequence, read N- to C-terminus: uncharacterized protein (565 aa).

Transmembrane regions (helical) follow at residues 14–34 (LAIFLTLFVGFWIGKIKIGKF), 36–56 (LGVVTSVLLVGVLVGQLDITV), 92–112 (MGFAAIMCVFCLIIPWILAKI), 117–137 (VGEAAGLLAGSQTISAVIGVA), and 157–177 (IIPVSYAVTYIFGTAGSAWVL). The 86-residue stretch at 296–381 (PEVLDPQLLD…VDAAAKQLGY (86 aa)) folds into the RCK C-terminal domain. A run of 6 helical transmembrane segments spans residues 391-411 (MIFVGLGILIGGLIGALSIHM), 414-434 (VPISLSTSGGALIGGLFFGWL), 448-468 (ALWILDNVGLNMFIAVVGIAA), 481-501 (LSLFIVGALATSIPLIAGILM), 508-530 (FHPALVLGCTAGARTTTAALGAI), and 545-565 (VTYAVGNTLLIIWGVVIVLLM).

The protein belongs to the AAE transporter (TC 2.A.81) family.

It is found in the cell membrane. This is an uncharacterized protein from Bacteroides fragilis (strain YCH46).